A 366-amino-acid polypeptide reads, in one-letter code: Ribosomal RNA large subunit methyltransferase M (366 aa).

S-adenosyl-L-methionine contacts are provided by residues Ser188, 221 to 224 (CPGG), Asp240, Asp260, and Asp277. The Proton acceptor role is filled by Lys306.

This sequence belongs to the class I-like SAM-binding methyltransferase superfamily. RNA methyltransferase RlmE family. RlmM subfamily. In terms of assembly, monomer.

The protein resides in the cytoplasm. It catalyses the reaction cytidine(2498) in 23S rRNA + S-adenosyl-L-methionine = 2'-O-methylcytidine(2498) in 23S rRNA + S-adenosyl-L-homocysteine + H(+). Its function is as follows. Catalyzes the 2'-O-methylation at nucleotide C2498 in 23S rRNA. This chain is Ribosomal RNA large subunit methyltransferase M, found in Pectobacterium atrosepticum (strain SCRI 1043 / ATCC BAA-672) (Erwinia carotovora subsp. atroseptica).